A 111-amino-acid chain; its full sequence is Antitoxin PrlF (111 aa).

Positions Thr12 to Asp59 constitute a SpoVT-AbrB domain.

Homodimer; forms a complex with YhaV with stoichiometry PrlF(2)-YhaV(4), possibly as a YhaV(2)-PrlF(2)-YhaV(2) complex like the MazFE complex. This complex is seen to dimerize in solution.

It localises to the cytoplasm. Functionally, antitoxin component of a type II toxin-antitoxin (TA) system. Labile antitoxin that binds to the YhaV toxin and neutralizes its ribonuclease activity. Also acts as a transcription factor. The YhaV/PrlF complex binds the prlF-yhaV operon, probably negatively regulating its expression. Its function is as follows. Negatively regulates its own expression as well as relieving the export block imposed by high-level synthesis of the LamB-LacZ hybrid protein. Overexpression leads to increased doubling time and also suppresses a htrA (degP) null phenotype. The polypeptide is Antitoxin PrlF (prlF) (Escherichia coli (strain K12)).